The sequence spans 31 residues: Bacteriocin leucocin-B (31 aa).

The protein resides in the secreted. Inhibits a wide spectrum of lactic acid bacteria. This Leuconostoc mesenteroides protein is Bacteriocin leucocin-B.